The chain runs to 185 residues: Ribosome-recycling factor (185 aa).

Belongs to the RRF family.

The protein localises to the cytoplasm. Responsible for the release of ribosomes from messenger RNA at the termination of protein biosynthesis. May increase the efficiency of translation by recycling ribosomes from one round of translation to another. The sequence is that of Ribosome-recycling factor from Frankia casuarinae (strain DSM 45818 / CECT 9043 / HFP020203 / CcI3).